The chain runs to 351 residues: Probable aldo-keto reductase 2 (351 aa).

The Proton donor role is filled by Tyr-67. His-134 serves as a coordination point for substrate. 213-223 (SPLGRGFFSAG) lines the NADP(+) pocket. The segment at 317–351 (YASTDDVRGDRYPQAMANTTWQNSETPPLSSWKAQ) is disordered. A compositionally biased stretch (polar residues) spans 332–351 (MANTTWQNSETPPLSSWKAQ).

The protein belongs to the aldo/keto reductase family.

The sequence is that of Probable aldo-keto reductase 2 from Oryza sativa subsp. japonica (Rice).